We begin with the raw amino-acid sequence, 371 residues long: Leucine-rich repeat-containing protein 2 (371 aa).

LRR repeat units follow at residues His122–Phe143, Ala145–Leu166, Asn168–Cys189, Asn191–Lys214, Gln215–Arg235, Asn238–Glu260, Glu261–Lys283, Lys284–Ser305, and Pro308–Glu329.

This is Leucine-rich repeat-containing protein 2 (LRRC2) from Homo sapiens (Human).